We begin with the raw amino-acid sequence, 245 residues long: Nicotinamide/nicotinic acid mononucleotide adenylyltransferase 3 (245 aa).

NAD(+)-binding residues include S14 and F15. Positions 22 and 56 each coordinate ATP. NAD(+) is bound by residues W90, T93, G134, and D136. Residue K139 participates in ATP binding. 4 residues coordinate NAD(+): L146, W147, R166, and N197. ATP is bound at residue 202-205 (TYVR).

Belongs to the eukaryotic NMN adenylyltransferase family. Homotetramer. Mg(2+) is required as a cofactor.

The protein resides in the mitochondrion. The enzyme catalyses beta-nicotinamide D-ribonucleotide + ATP + H(+) = diphosphate + NAD(+). It catalyses the reaction nicotinate beta-D-ribonucleotide + ATP + H(+) = deamido-NAD(+) + diphosphate. Its pathway is cofactor biosynthesis; NAD(+) biosynthesis; NAD(+) from nicotinamide D-ribonucleotide: step 1/1. It functions in the pathway cofactor biosynthesis; NAD(+) biosynthesis; deamido-NAD(+) from nicotinate D-ribonucleotide: step 1/1. With respect to regulation, activity is strongly inhibited by galotannin. Inhibited by P1-(adenosine-5')-P4-(nicotinic-acid-riboside-5')-tetraphosphate (Nap4AD). Catalyzes the formation of NAD(+) from nicotinamide mononucleotide (NMN) and ATP. Can also use the deamidated form; nicotinic acid mononucleotide (NaMN) as substrate with the same efficiency. Can use triazofurin monophosphate (TrMP) as substrate. Can also use GTP and ITP as nucleotide donors. Also catalyzes the reverse reaction, i.e. the pyrophosphorolytic cleavage of NAD(+). For the pyrophosphorolytic activity, can use NAD(+), NADH, NaAD, nicotinic acid adenine dinucleotide phosphate (NHD), nicotinamide guanine dinucleotide (NGD) as substrates. Fails to cleave phosphorylated dinucleotides NADP(+), NADPH and NaADP(+). Protects against axonal degeneration following injury. May be involved in the maintenance of axonal integrity. Also functions as a stress-response chaperone protein that prevents toxic aggregation of proteins; this function may be independent of its NAD(+) synthesis activity. The polypeptide is Nicotinamide/nicotinic acid mononucleotide adenylyltransferase 3 (Mus musculus (Mouse)).